Consider the following 271-residue polypeptide: Phosphonates import ATP-binding protein PhnC 2 (271 aa).

Residues 2-245 (LVVEGLTCRF…IARELYDLEA (244 aa)) enclose the ABC transporter domain. 34 to 41 (GRSGAGKS) is a binding site for ATP.

It belongs to the ABC transporter superfamily. Phosphonates importer (TC 3.A.1.9.1) family. In terms of assembly, the complex is composed of two ATP-binding proteins (PhnC), two transmembrane proteins (PhnE) and a solute-binding protein (PhnD).

Its subcellular location is the cell inner membrane. It catalyses the reaction phosphonate(out) + ATP + H2O = phosphonate(in) + ADP + phosphate + H(+). Part of the ABC transporter complex PhnCDE involved in phosphonates import. Responsible for energy coupling to the transport system. This chain is Phosphonates import ATP-binding protein PhnC 2, found in Rhodopseudomonas palustris (strain BisB18).